We begin with the raw amino-acid sequence, 384 residues long: tRNA-dihydrouridine(20) synthase [NAD(P)+] (384 aa).

FMN-binding positions include 12–14 (PMV) and glutamine 88. The active-site Proton donor is the cysteine 117. FMN-binding positions include lysine 160, histidine 188, 222–224 (NGA), and 249–250 (AE). Positions 359–384 (KQKRKQTDHIGSDTKKQKVVPLPTDI) are disordered. A compositionally biased stretch (basic and acidic residues) spans 363 to 374 (KQTDHIGSDTKK).

This sequence belongs to the Dus family. Dus2 subfamily. Monomer. FMN serves as cofactor. N-glycosylated.

The protein localises to the cytoplasm. Its subcellular location is the nucleus. The enzyme catalyses 5,6-dihydrouridine(20) in tRNA + NADP(+) = uridine(20) in tRNA + NADPH + H(+). It catalyses the reaction 5,6-dihydrouridine(20) in tRNA + NAD(+) = uridine(20) in tRNA + NADH + H(+). It carries out the reaction a 5,6-dihydrouridine in mRNA + NAD(+) = a uridine in mRNA + NADH + H(+). The catalysed reaction is a 5,6-dihydrouridine in mRNA + NADP(+) = a uridine in mRNA + NADPH + H(+). Its function is as follows. Catalyzes the NADPH-dependent synthesis of dihydrouridine, a modified base found in the D-loop of most tRNAs. Specifically modifies U20 in cytoplasmic tRNAs. Also able to mediate dihydrouridylation of some mRNAs, thereby affecting their translation. The chain is tRNA-dihydrouridine(20) synthase [NAD(P)+] (SMM1) from Saccharomyces cerevisiae (strain ATCC 204508 / S288c) (Baker's yeast).